We begin with the raw amino-acid sequence, 305 residues long: MPLNLPDKLPAIELLKEENIFVIDNSRASAQDIRPLKIVILNLMPLKITTETDLVRLLSNTPLQLEISFMKLKSHTSKNTPVEHMKAFYHDFDLMRDEKYDGMIITGAPVEQMPYEDVNYWDEITTIFDWARTHVTSTLYICWAAQAGLYHFYGVPKYPLKQKMFGIFRHHINVQGLPIFRGFDDEFFVPHSRHTEIHREDILKVKELALIAESDESGVYMAMARNGREFFITGHSEYSPYTLDTEYKRDLAKGLPIEMPVNYYKDDNPDNAPVVRWRGHANLLFSNWLNYYVYQETPFDINQIR.

Cysteine 142 functions as the Acyl-thioester intermediate in the catalytic mechanism. Substrate is bound by residues lysine 163 and serine 192. Histidine 235 acts as the Proton acceptor in catalysis. Glutamate 237 is a catalytic residue. Substrate is bound at residue arginine 249.

Belongs to the MetA family.

It localises to the cytoplasm. It catalyses the reaction L-homoserine + acetyl-CoA = O-acetyl-L-homoserine + CoA. It functions in the pathway amino-acid biosynthesis; L-methionine biosynthesis via de novo pathway; O-acetyl-L-homoserine from L-homoserine: step 1/1. In terms of biological role, transfers an acetyl group from acetyl-CoA to L-homoserine, forming acetyl-L-homoserine. This is Homoserine O-acetyltransferase from Phocaeicola vulgatus (strain ATCC 8482 / DSM 1447 / JCM 5826 / CCUG 4940 / NBRC 14291 / NCTC 11154) (Bacteroides vulgatus).